The chain runs to 353 residues: Guanine nucleotide-binding protein subunit alpha (353 aa).

Residue Gly2 is the site of N-myristoyl glycine attachment. Cys3 carries the S-palmitoyl cysteine lipid modification. The G-alpha domain maps to 33 to 353 (NEIKMLLLGA…QLHLRECGLL (321 aa)). The tract at residues 36–49 (KMLLLGAGESGKST) is G1 motif. Positions 44, 45, 46, 47, 48, 49, 150, 175, 181, 203, 269, 270, 272, and 325 each coordinate GTP. Ser48 serves as a coordination point for Mg(2+). The G2 motif stretch occupies residues 173–181 (DILRSRVKT). Residue Thr181 coordinates Mg(2+). A G3 motif region spans residues 196 to 205 (YKLFDVGGQR). Positions 265–272 (ILFLNKID) are G4 motif. The interval 323–328 (TCATDT) is G5 motif.

It belongs to the G-alpha family. G(q) subfamily. As to quaternary structure, g proteins are composed of 3 units; alpha, beta and gamma. The alpha chain contains the guanine nucleotide binding site. The cofactor is Mg(2+).

Functionally, guanine nucleotide-binding proteins (G proteins) are involved as modulators or transducers in various transmembrane signaling systems. In Coprinellus congregatus (Inky cap fungus), this protein is Guanine nucleotide-binding protein subunit alpha (CGP1).